A 380-amino-acid chain; its full sequence is Cytochrome b (380 aa).

Transmembrane regions (helical) follow at residues 33–53 (FGSL…FLAM), 77–98 (WLIR…YMHI), 113–133 (WNIG…GYVL), and 178–198 (FFAF…LHLL). Residues His83 and His97 each contribute to the heme b site. Positions 182 and 196 each coordinate heme b. His201 contacts a ubiquinone. The next 4 membrane-spanning stretches (helical) occupy residues 226–246 (YKDL…ALFA), 288–308 (LGGV…PFLH), 320–340 (LTQM…WIGG), and 347–367 (FIII…VLFP).

This sequence belongs to the cytochrome b family. As to quaternary structure, the cytochrome bc1 complex contains 3 respiratory subunits (MT-CYB, CYC1 and UQCRFS1), 2 core proteins (UQCRC1 and UQCRC2) and probably 6 low-molecular weight proteins. Heme b serves as cofactor.

It localises to the mitochondrion inner membrane. Functionally, component of the ubiquinol-cytochrome c reductase complex (complex III or cytochrome b-c1 complex) that is part of the mitochondrial respiratory chain. The b-c1 complex mediates electron transfer from ubiquinol to cytochrome c. Contributes to the generation of a proton gradient across the mitochondrial membrane that is then used for ATP synthesis. This is Cytochrome b (mt-cyb) from Gadus morhua (Atlantic cod).